The chain runs to 146 residues: Transcriptional regulator MraZ (146 aa).

2 SpoVT-AbrB domains span residues 9–55 (ASAL…PRPA) and 81–124 (AMDV…DVQR).

The protein belongs to the MraZ family. Forms oligomers.

The protein localises to the cytoplasm. The protein resides in the nucleoid. This Methylibium petroleiphilum (strain ATCC BAA-1232 / LMG 22953 / PM1) protein is Transcriptional regulator MraZ.